A 1989-amino-acid chain; its full sequence is Exophilin-5 (1989 aa).

In terms of domain architecture, RabBD spans 7-63 (AFDFSFLNDEEARKILQVLERNEELQRAEKDRISKLQKTKRDIRWLQGVTGEWFEEI). 2 disordered regions span residues 93–117 (NDPIELPTSRSKNVTNQKKPTPFSS) and 348–391 (TQSK…FLRA). Polar residues-rich tracts occupy residues 100–111 (TSRSKNVTNQKK) and 359–376 (HQQSPKRTPLSSIIWNRS). Over residues 377-389 (DSSRDRENQEEFL) the composition is skewed to basic and acidic residues. S603 bears the Phosphoserine mark. 3 disordered regions span residues 631 to 651 (FSQISDDRRNPQSPNLQNPTV), 806 to 827 (STASLPFIQEHRTPPSFPRTDQ), and 882 to 933 (AALP…NQKN). A compositionally biased stretch (polar residues) spans 641 to 651 (PQSPNLQNPTV). Residues S806 and S809 each carry the phosphoserine modification. Positions 891 to 909 (KNSSLDAPVVPSTTVFSRR) are enriched in polar residues. Basic and acidic residues predominate over residues 910–927 (SPSDKDPSLGEREEKDNA). Phosphoserine is present on residues S1028 and S1086. 3 disordered regions span residues 1094 to 1113 (EATERMTNVKSSGSTSVRKG), 1124 to 1152 (SCPSGEPHASTGREGRKKPLTSGMDASEL), and 1365 to 1493 (EIFS…TNCQ). Over residues 1098–1110 (RMTNVKSSGSTSV) the composition is skewed to polar residues. S1124 is modified (phosphoserine). The segment covering 1379-1390 (SENKKERGKKLQ) has biased composition (basic and acidic residues). Over residues 1416-1431 (SINSSNSGPSSLPALS) the composition is skewed to low complexity. Polar residues predominate over residues 1434–1447 (NIGNSQTRRSSWEC). S1505 is subject to Phosphoserine. Disordered stretches follow at residues 1521 to 1590 (EETQ…NRSS) and 1644 to 1737 (PEPT…PITF). 3 stretches are compositionally biased toward basic and acidic residues: residues 1551-1560 (ESRKAEDEMQ), 1573-1589 (NKNKTNLDDLVKGENRS), and 1658-1670 (RLSENGKHVKKSE). Residues 1685–1709 (THVSNQKSNSISQRHQNEFKNVSES) are compositionally biased toward polar residues. Phosphoserine is present on residues S1753, S1768, S1821, and S1851. Residues 1921 to 1989 (FLKDDLRNPP…LDENDKESEL (69 aa)) are disordered. Positions 1933–1943 (SESLSSNSPSS) are enriched in low complexity. Positions 1959 to 1989 (YEDDPVDSDCDTDTTTDDEYYLDENDKESEL) are enriched in acidic residues.

As to quaternary structure, interacts with RAB27A. Expressed in keratinocytes.

Functionally, may act as Rab effector protein and play a role in vesicle trafficking. The chain is Exophilin-5 from Homo sapiens (Human).